Consider the following 490-residue polypeptide: Adenylosuccinate synthetase 1, chloroplastic (490 aa).

The N-terminal 47 residues, 1–47, are a transit peptide targeting the chloroplast; sequence MSLSTLSHPAAAAAAATGSGKSHFRTAPAAQSVRFPKARPPVPAAVS. Residues 14-36 form a disordered region; it reads AAATGSGKSHFRTAPAAQSVRFP. Residues 77–83 and 105–107 contribute to the GTP site; these read GDEGKGK and GHT. The Proton acceptor role is filled by aspartate 78. The Mg(2+) site is built by aspartate 78 and glycine 105. IMP-binding positions include 78–81, 103–106, threonine 195, arginine 209, glutamine 289, threonine 304, and arginine 368; these read DEGK and NAGH. Residue histidine 106 is the Proton donor of the active site. 364–370 is a binding site for substrate; it reads TTTGRPR. Residues arginine 370, 396 to 398, and 479 to 481 contribute to the GTP site; these read KLD and GVG.

The protein belongs to the adenylosuccinate synthetase family. In terms of assembly, homodimer. Requires Mg(2+) as cofactor.

The protein resides in the plastid. The protein localises to the chloroplast. The enzyme catalyses IMP + L-aspartate + GTP = N(6)-(1,2-dicarboxyethyl)-AMP + GDP + phosphate + 2 H(+). Its pathway is purine metabolism; AMP biosynthesis via de novo pathway; AMP from IMP: step 1/2. In terms of biological role, plays an important role in the de novo pathway and in the salvage pathway of purine nucleotide biosynthesis. Catalyzes the first committed step in the biosynthesis of AMP from IMP. The chain is Adenylosuccinate synthetase 1, chloroplastic from Sorghum bicolor (Sorghum).